We begin with the raw amino-acid sequence, 365 residues long: Histidinol-phosphate aminotransferase (365 aa).

Position 220 is an N6-(pyridoxal phosphate)lysine (K220).

This sequence belongs to the class-II pyridoxal-phosphate-dependent aminotransferase family. Histidinol-phosphate aminotransferase subfamily. In terms of assembly, homodimer. It depends on pyridoxal 5'-phosphate as a cofactor.

The enzyme catalyses L-histidinol phosphate + 2-oxoglutarate = 3-(imidazol-4-yl)-2-oxopropyl phosphate + L-glutamate. The protein operates within amino-acid biosynthesis; L-histidine biosynthesis; L-histidine from 5-phospho-alpha-D-ribose 1-diphosphate: step 7/9. This is Histidinol-phosphate aminotransferase from Xylella fastidiosa (strain 9a5c).